Reading from the N-terminus, the 365-residue chain is Putative 2-dehydropantoate 2-reductase (365 aa).

It belongs to the ketopantoate reductase family.

It catalyses the reaction (R)-pantoate + NADP(+) = 2-dehydropantoate + NADPH + H(+). Its pathway is cofactor biosynthesis; (R)-pantothenate biosynthesis; (R)-pantoate from 3-methyl-2-oxobutanoate: step 2/2. Functionally, catalyzes the NADPH-dependent reduction of ketopantoate into pantoic acid. The sequence is that of Putative 2-dehydropantoate 2-reductase (KPR) from Arabidopsis thaliana (Mouse-ear cress).